The primary structure comprises 858 residues: MAFPAPAFSLANLLNGTYGVDTPEEVERVRSEQREEAAAACRNYKPLPAVDVGASVTEDAHSLRTPDGAPSEEVSVEFVTYGAEDYLEKSDDELFVAFETMVKPMCIGQLWCPAFNKCSFISSIAMARALLLVPNTPNRTMKCFEDLVAAIYTKSDFYYDDECEADDVQINISSRDVPGYSFEPWSRTSGFEPPPICEACNMIMYQCPCFDFNALKKSCAERTFADDYVIEGLDGVVDNATLLSNLGPFLVPVKCQYKQYPTPTVAIPPSLNRATDRVDINLVQSICDSTLPTHSNYDDSFHQVFVESADYSIDLDHVRLRQSDLIAKIPDSGHMIPVLNTGSGHKRVGTTKEVLTAIKKRNADVPELGDSVNLPRLSKAVAERFFIAYINGNSLATSNFVNVVSNFHDYMEKWKSSGLSYDDLPDLHAENLQFYDHMIKSDVKPVVSDTLNIDRPVPATITYHKKGITSQFSPLFTALFERFQRCLRERVILPVGKISSLEMSGFDVKNKYCLEIDLSKFDKSQGEFHLMIQEHILNGLGCPAPITKWWCDFHRFSYIRDRRAGVGMPISFQRRTGDAFTYFGNTIVTMAEFAWCYDTDQFEKLLFPGDDSLGFSVLPPVGDPSKFTTLFNMEAKVMEPAVPYICSKFLLSDEFGNTFSVPDPLREVQRLGTKKIPYSDNDEFLFAHFMSFVDRLKFLDRMTQSCIDQLSLFFELKYRKSGAEAALMLGAFKKYTANFQSYKELYYSDRRQCELINSFSCVELRIERSSFIKQRKKKDGIERRRNDKRRTPTSPHGGGEETETKVSQEESTGTMLQKSQRESAFKSQTIPFPTVLSSRRFGIDRDVPPRECGGIVRV.

The RdRp catalytic domain maps to 511-624 (KYCLEIDLSK…FSVLPPVGDP (114 aa)). The disordered stretch occupies residues 775-830 (RKKKDGIERRRNDKRRTPTSPHGGGEETETKVSQEESTGTMLQKSQRESAFKSQTI). Basic and acidic residues predominate over residues 798–808 (GGEETETKVSQ). Polar residues predominate over residues 809-818 (EESTGTMLQK).

It belongs to the ssRNA positive-strand viruses RNA-directed RNA polymerase family. Interacts with replication protein 1a.

It catalyses the reaction RNA(n) + a ribonucleoside 5'-triphosphate = RNA(n+1) + diphosphate. In terms of biological role, RNA-dependent RNA polymerase which replicates the viral genome composed of 3 RNA segments, RNA1, RNA2 and RNA3. The sequence is that of RNA-directed RNA polymerase 2a from Cucumber mosaic virus (strain Ixora) (CMV).